We begin with the raw amino-acid sequence, 135 residues long: Nucleoside diphosphate kinase (135 aa).

6 residues coordinate ATP: lysine 9, tyrosine 57, arginine 85, threonine 91, arginine 102, and asparagine 112. The active-site Pros-phosphohistidine intermediate is the histidine 115.

Belongs to the NDK family. Homotetramer. It depends on Mg(2+) as a cofactor.

The protein localises to the cytoplasm. It carries out the reaction a 2'-deoxyribonucleoside 5'-diphosphate + ATP = a 2'-deoxyribonucleoside 5'-triphosphate + ADP. The catalysed reaction is a ribonucleoside 5'-diphosphate + ATP = a ribonucleoside 5'-triphosphate + ADP. Its function is as follows. Major role in the synthesis of nucleoside triphosphates other than ATP. The ATP gamma phosphate is transferred to the NDP beta phosphate via a ping-pong mechanism, using a phosphorylated active-site intermediate. The sequence is that of Nucleoside diphosphate kinase from Thermoanaerobacter pseudethanolicus (strain ATCC 33223 / 39E) (Clostridium thermohydrosulfuricum).